Consider the following 296-residue polypeptide: Co-chaperone protein DjlA (296 aa).

At 1–15 (MNLRDFFVITTWWGK) the chain is on the periplasmic side. The chain crosses the membrane as a helical span at residues 16–39 (ILGAFFGYLTAGPVGALFGILVGN). Over 40–296 (FFDRGLVSYY…YELICETKGW (257 aa)) the chain is Cytoplasmic. Residues 200–225 (QHYHNQQEYKHTSSSQGQQGYKPQSP) form a disordered region. Polar residues predominate over residues 211–221 (TSSSQGQQGYK). In terms of domain architecture, J spans 231–296 (HAFALLEVSP…YELICETKGW (66 aa)).

In terms of assembly, homodimer.

The protein localises to the cell inner membrane. Its function is as follows. Regulatory DnaK co-chaperone. Direct interaction between DnaK and DjlA is needed for the induction of the wcaABCDE operon, involved in the synthesis of a colanic acid polysaccharide capsule, possibly through activation of the RcsB/RcsC phosphotransfer signaling pathway. The colanic acid capsule may help the bacterium survive conditions outside the host. This chain is Co-chaperone protein DjlA, found in Legionella pneumophila subsp. pneumophila (strain Philadelphia 1 / ATCC 33152 / DSM 7513).